The chain runs to 445 residues: UDP-N-acetylmuramoylalanine--D-glutamate ligase (445 aa).

An ATP-binding site is contributed by Gly117–Thr123.

The protein belongs to the MurCDEF family.

The protein localises to the cytoplasm. The enzyme catalyses UDP-N-acetyl-alpha-D-muramoyl-L-alanine + D-glutamate + ATP = UDP-N-acetyl-alpha-D-muramoyl-L-alanyl-D-glutamate + ADP + phosphate + H(+). The protein operates within cell wall biogenesis; peptidoglycan biosynthesis. Cell wall formation. Catalyzes the addition of glutamate to the nucleotide precursor UDP-N-acetylmuramoyl-L-alanine (UMA). This Neisseria meningitidis serogroup B (strain ATCC BAA-335 / MC58) protein is UDP-N-acetylmuramoylalanine--D-glutamate ligase.